The sequence spans 561 residues: Proline--tRNA ligase (561 aa).

This sequence belongs to the class-II aminoacyl-tRNA synthetase family. ProS type 1 subfamily. In terms of assembly, homodimer.

The protein resides in the cytoplasm. It catalyses the reaction tRNA(Pro) + L-proline + ATP = L-prolyl-tRNA(Pro) + AMP + diphosphate. Its function is as follows. Catalyzes the attachment of proline to tRNA(Pro) in a two-step reaction: proline is first activated by ATP to form Pro-AMP and then transferred to the acceptor end of tRNA(Pro). As ProRS can inadvertently accommodate and process non-cognate amino acids such as alanine and cysteine, to avoid such errors it has two additional distinct editing activities against alanine. One activity is designated as 'pretransfer' editing and involves the tRNA(Pro)-independent hydrolysis of activated Ala-AMP. The other activity is designated 'posttransfer' editing and involves deacylation of mischarged Ala-tRNA(Pro). The misacylated Cys-tRNA(Pro) is not edited by ProRS. The protein is Proline--tRNA ligase of Thermosipho africanus (strain TCF52B).